We begin with the raw amino-acid sequence, 301 residues long: Glycine--tRNA ligase alpha subunit (301 aa).

This sequence belongs to the class-II aminoacyl-tRNA synthetase family. Tetramer of two alpha and two beta subunits.

It localises to the cytoplasm. The catalysed reaction is tRNA(Gly) + glycine + ATP = glycyl-tRNA(Gly) + AMP + diphosphate. The chain is Glycine--tRNA ligase alpha subunit from Pseudoalteromonas atlantica (strain T6c / ATCC BAA-1087).